The chain runs to 470 residues: MTAPVQVPQSLLLLLMLLLTLPATGSDPVLCFSQYEDSSSKCKDLLGKDVSLEDCCLNAAYAFKERDNGHCQACRSPRWSPWSSWAPCSVSCSEGSQLRHRRCIGWGGQCSENKAPGTLEWQLQACEEQQCCPEMGGWSNWEPWGPCTVTCSKGTRIRRRVCNNPAPKCGGHCPGVAQESEACDTQQVCPTHGAWGPWGPWSSCLSSCHGGPHKPVETRSRTCSAPEPSKNPPGNPCPGTAYEQQSCAGLPPCPVAGGWGPWGSVSPCSVTCGLGQILEQRKCDNPVPQHGGSFCTGDDTRAHICNTAVPCPVDGEWEPWGDWSTCTRPHLSAIRCKEIVGQQTRVRICKGRKFNGQRCPGKHQEIRHCYNIQNCIFGEKGSWSQWTPWGLCTPPCGANPTRVRQRRCMASLPKFSPTVSVVEGQGEKNVTFWGKPLAQCEELQGQKVLLEEKRPCLHVPACKDPEEEEP.

The first 26 residues, 1–26 (MTAPVQVPQSLLLLLMLLLTLPATGS), serve as a signal peptide directing secretion. TSP type-1 domains lie at 27–75 (DPVL…QACR), 76–133 (SPRW…QCCP), 135–190 (MGGW…QVCP), 192–254 (HGAW…PPCP), 256–312 (AGGW…VPCP), 314–376 (DGEW…QNCI), and 380–463 (KGSW…PACK). Intrachain disulfides connect Cys-31/Cys-55, Cys-42/Cys-71, and Cys-56/Cys-74. Residues Trp-82 and Trp-85 are each glycosylated (C-linked (Man) tryptophan). 7 disulfide bridges follow: Cys-88–Cys-126, Cys-92–Cys-132, Cys-103–Cys-110, Cys-131–Cys-169, Cys-147–Cys-183, Cys-151–Cys-189, and Cys-162–Cys-173. 3 C-linked (Man) tryptophan glycosylation sites follow: Trp-138, Trp-141, and Trp-144. Thr-150 is a glycosylation site (O-linked (Fuc...) threonine). 3 C-linked (Man) tryptophan glycosylation sites follow: Trp-195, Trp-198, and Trp-201. 3 cysteine pairs are disulfide-bonded: Cys-204/Cys-247, Cys-208/Cys-253, and Cys-223/Cys-237. Ser-207 is a glycosylation site (O-linked (Fuc...) serine). C-linked (Man) tryptophan glycosylation is found at Trp-259 and Trp-262. 3 disulfide bridges follow: Cys-268/Cys-305, Cys-272/Cys-311, and Cys-283/Cys-295. Thr-271 is a glycosylation site (O-linked (Fuc...) threonine). 2 C-linked (Man) tryptophan glycosylation sites follow: Trp-320 and Trp-323. Disulfide bonds link Cys-326–Cys-369, Cys-336–Cys-375, and Cys-349–Cys-359. Residues 350 to 358 (KGRKFNGQR) are interaction with Complement C3 beta chain. Residues Trp-383, Trp-386, and Trp-389 are each glycosylated (C-linked (Man) tryptophan). 3 cysteine pairs are disulfide-bonded: Cys-392-Cys-456, Cys-396-Cys-462, and Cys-408-Cys-440. A glycan (N-linked (GlcNAc...) asparagine) is linked at Asn-429.

In plasma, properdin exists as dimers, trimers or tetramers in the relative proportions of 26:54:20. Interacts with the pro-C3-convertase enzyme complex (C3b-Bb) comprised of Complement C3 beta chain (C3b) and the Complement factor B Bb fragment (Bb), where it binds (via its TSP type-1 5 domain) with C3b and Bb. This interaction stabilizes the complex and allows it to become the active C3-convertase enzyme complex (C3b-Bb-FP). Interacts with C3b. Interacts with CFB.

It is found in the secreted. A positive regulator of the alternate pathway of complement. It binds to and stabilizes the C3- and C5-convertase enzyme complexes. Inhibits CFI-CFH mediated degradation of Inhibits CFI-CFH mediated degradation of Complement C3 beta chain (C3b). The protein is Properdin (CFP) of Cavia porcellus (Guinea pig).